Here is a 915-residue protein sequence, read N- to C-terminus: Probable serine/threonine-protein kinase dyrk2 (915 aa).

Composition is skewed to low complexity over residues 51-79, 108-119, 170-185, and 196-218; these read TSNT…PTIS, SSSKSSSNSSSI, SSSS…STTS, and SSNS…SGSS. Disordered regions lie at residues 51 to 119, 132 to 334, and 349 to 533; these read TSNT…SSSI, FSSS…SKSS, and AIKS…PTKS. Residues 234–260 show a composition bias toward polar residues; that stretch reads PSHTISDSPRSSTMKSRSVSISNGSLF. Composition is skewed to low complexity over residues 261–287, 300–333, 352–364, 379–391, 399–425, and 433–533; these read SPTN…SSIS, SSST…PSKS, SRSL…LARV, SSSS…SFSS, SSSK…ASKI, and SLSS…PTKS. The region spanning 605 to 902 is the Protein kinase domain; the sequence is FEIVSILGQG…AEQGLKHDWI (298 aa). ATP contacts are provided by residues 611–619 and Lys634; that span reads LGQGSFCQV. Asp731 serves as the catalytic Proton acceptor.

This sequence belongs to the protein kinase superfamily. CMGC Ser/Thr protein kinase family. MNB/DYRK subfamily.

The enzyme catalyses L-seryl-[protein] + ATP = O-phospho-L-seryl-[protein] + ADP + H(+). It catalyses the reaction L-threonyl-[protein] + ATP = O-phospho-L-threonyl-[protein] + ADP + H(+). It carries out the reaction L-tyrosyl-[protein] + ATP = O-phospho-L-tyrosyl-[protein] + ADP + H(+). The polypeptide is Probable serine/threonine-protein kinase dyrk2 (dyrk2) (Dictyostelium discoideum (Social amoeba)).